Reading from the N-terminus, the 356-residue chain is Phosphatidylglycerol--prolipoprotein diacylglyceryl transferase (356 aa).

4 helical membrane passes run 24–44 (IKWY…LACV), 59–79 (WFVF…SFII), 103–123 (LAIE…FPLV), and 144–164 (VSMW…QIIG). Arg-165 serves as a coordination point for a 1,2-diacyl-sn-glycero-3-phospho-(1'-sn-glycerol). 2 consecutive transmembrane segments (helical) span residues 209–229 (PFFL…YIGG) and 265–285 (FATS…LLVC).

Belongs to the Lgt family.

The protein localises to the cell membrane. The enzyme catalyses L-cysteinyl-[prolipoprotein] + a 1,2-diacyl-sn-glycero-3-phospho-(1'-sn-glycerol) = an S-1,2-diacyl-sn-glyceryl-L-cysteinyl-[prolipoprotein] + sn-glycerol 1-phosphate + H(+). It participates in protein modification; lipoprotein biosynthesis (diacylglyceryl transfer). Catalyzes the transfer of the diacylglyceryl group from phosphatidylglycerol to the sulfhydryl group of the N-terminal cysteine of a prolipoprotein, the first step in the formation of mature lipoproteins. This is Phosphatidylglycerol--prolipoprotein diacylglyceryl transferase from Malacoplasma penetrans (strain HF-2) (Mycoplasma penetrans).